Reading from the N-terminus, the 459-residue chain is Bifunctional protein GlmU (459 aa).

Residues 1-229 (MSNYAIILAA…FDESLGVNDR (229 aa)) are pyrophosphorylase. UDP-N-acetyl-alpha-D-glucosamine-binding positions include 8–11 (LAAG), Lys-22, Gln-72, and 77–78 (GT). A Mg(2+)-binding site is contributed by Asp-102. The UDP-N-acetyl-alpha-D-glucosamine site is built by Gly-139, Glu-154, Asn-169, and Asn-227. Asn-227 serves as a coordination point for Mg(2+). A linker region spans residues 230 to 250 (VALATAEKVMRHRIARQHMVN). The N-acetyltransferase stretch occupies residues 251–459 (GVTVVNPDSA…NKKPHHPSQK (209 aa)). Residues Arg-332 and Lys-350 each coordinate UDP-N-acetyl-alpha-D-glucosamine. The Proton acceptor role is filled by His-362. The UDP-N-acetyl-alpha-D-glucosamine site is built by Tyr-365 and Asn-376. Acetyl-CoA-binding positions include Ala-379, 385–386 (NY), Ser-404, Ala-422, and Arg-439.

In the N-terminal section; belongs to the N-acetylglucosamine-1-phosphate uridyltransferase family. This sequence in the C-terminal section; belongs to the transferase hexapeptide repeat family. Homotrimer. Mg(2+) is required as a cofactor.

It is found in the cytoplasm. The enzyme catalyses alpha-D-glucosamine 1-phosphate + acetyl-CoA = N-acetyl-alpha-D-glucosamine 1-phosphate + CoA + H(+). It catalyses the reaction N-acetyl-alpha-D-glucosamine 1-phosphate + UTP + H(+) = UDP-N-acetyl-alpha-D-glucosamine + diphosphate. It functions in the pathway nucleotide-sugar biosynthesis; UDP-N-acetyl-alpha-D-glucosamine biosynthesis; N-acetyl-alpha-D-glucosamine 1-phosphate from alpha-D-glucosamine 6-phosphate (route II): step 2/2. The protein operates within nucleotide-sugar biosynthesis; UDP-N-acetyl-alpha-D-glucosamine biosynthesis; UDP-N-acetyl-alpha-D-glucosamine from N-acetyl-alpha-D-glucosamine 1-phosphate: step 1/1. Its pathway is bacterial outer membrane biogenesis; LPS lipid A biosynthesis. Its function is as follows. Catalyzes the last two sequential reactions in the de novo biosynthetic pathway for UDP-N-acetylglucosamine (UDP-GlcNAc). The C-terminal domain catalyzes the transfer of acetyl group from acetyl coenzyme A to glucosamine-1-phosphate (GlcN-1-P) to produce N-acetylglucosamine-1-phosphate (GlcNAc-1-P), which is converted into UDP-GlcNAc by the transfer of uridine 5-monophosphate (from uridine 5-triphosphate), a reaction catalyzed by the N-terminal domain. This is Bifunctional protein GlmU from Streptococcus agalactiae serotype III (strain NEM316).